The sequence spans 1877 residues: Phosphatidylinositol 4-kinase stt4 (1877 aa).

Residues 1305–1491 form the PIK helical domain; it reads PDSDAASSPI…KPILDRVMDK (187 aa). The segment at 1492 to 1625 is pleckstrin homology (PH) domain conferring phosphoinositide binding specificity; it reads MINSLSGEDK…EVWQSAIFKV (134 aa). Residues 1593–1861 form the PI3K/PI4K catalytic domain; sequence DPEELAVNGT…LIEQSYANKR (269 aa). The segment at 1599–1605 is G-loop; the sequence is VNGTEEE. Residues 1728–1736 are catalytic loop; sequence QFKDRHNGN. Residues 1747–1771 form an activation loop region; sequence HIDFGFIFDIAPGGITFESAPFKLT.

Belongs to the PI3/PI4-kinase family. Type III PI4K subfamily.

The protein localises to the cytoplasm. The enzyme catalyses a 1,2-diacyl-sn-glycero-3-phospho-(1D-myo-inositol) + ATP = a 1,2-diacyl-sn-glycero-3-phospho-(1D-myo-inositol 4-phosphate) + ADP + H(+). Acts on phosphatidylinositol (PI) in the first committed step in the production of the second messenger inositol 1,4,5,-trisphosphate. The sequence is that of Phosphatidylinositol 4-kinase stt4 (stt4) from Schizosaccharomyces pombe (strain 972 / ATCC 24843) (Fission yeast).